The chain runs to 368 residues: Homoserine O-acetyltransferase (368 aa).

Positions Ile-43–Glu-346 constitute an AB hydrolase-1 domain. The active-site Nucleophile is Ser-145. Arg-212 lines the substrate pocket. Catalysis depends on residues Asp-307 and His-340. Position 341 (Asp-341) interacts with substrate.

It belongs to the AB hydrolase superfamily. MetX family. In terms of assembly, homodimer.

It is found in the cytoplasm. The catalysed reaction is L-homoserine + acetyl-CoA = O-acetyl-L-homoserine + CoA. It functions in the pathway amino-acid biosynthesis; L-methionine biosynthesis via de novo pathway; O-acetyl-L-homoserine from L-homoserine: step 1/1. Its function is as follows. Transfers an acetyl group from acetyl-CoA to L-homoserine, forming acetyl-L-homoserine. The sequence is that of Homoserine O-acetyltransferase from Listeria innocua serovar 6a (strain ATCC BAA-680 / CLIP 11262).